Here is a 126-residue protein sequence, read N- to C-terminus: Glycine cleavage system H protein (126 aa).

One can recognise a Lipoyl-binding domain in the interval 21-103 (TVTVGISDHA…YESGWIARIK (83 aa)). The residue at position 62 (Lys-62) is an N6-lipoyllysine.

It belongs to the GcvH family. As to quaternary structure, the glycine cleavage system is composed of four proteins: P, T, L and H. It depends on (R)-lipoate as a cofactor.

In terms of biological role, the glycine cleavage system catalyzes the degradation of glycine. The H protein shuttles the methylamine group of glycine from the P protein to the T protein. In Aliivibrio fischeri (strain ATCC 700601 / ES114) (Vibrio fischeri), this protein is Glycine cleavage system H protein.